Consider the following 221-residue polypeptide: NADH-ubiquinone oxidoreductase chain 6 (221 aa).

A run of 5 helical transmembrane segments spans residues 18–38 (FVEY…IYVI), 44–64 (IVSV…LNII), 74–94 (IIVY…LINI), 107–127 (IPLT…MLPY), and 195–215 (IWLI…IVIT).

Belongs to the complex I subunit 6 family.

It is found in the mitochondrion membrane. It catalyses the reaction a ubiquinone + NADH + 5 H(+)(in) = a ubiquinol + NAD(+) + 4 H(+)(out). Its function is as follows. Core subunit of the mitochondrial membrane respiratory chain NADH dehydrogenase (Complex I) that is believed to belong to the minimal assembly required for catalysis. Complex I functions in the transfer of electrons from NADH to the respiratory chain. The immediate electron acceptor for the enzyme is believed to be ubiquinone. This chain is NADH-ubiquinone oxidoreductase chain 6 (ND6), found in Podospora anserina (strain S / ATCC MYA-4624 / DSM 980 / FGSC 10383) (Pleurage anserina).